The sequence spans 98 residues: NADH-ubiquinone oxidoreductase chain 4L (98 aa).

3 helical membrane passes run 2-22, 29-49, and 61-81; these read PSISTNITLAFTIALTGMLVF, SLLCLEGMMLAMFILSILFIM, and ILLLVLAACEAAIGLALLVMV.

It belongs to the complex I subunit 4L family. In terms of assembly, core subunit of respiratory chain NADH dehydrogenase (Complex I) which is composed of 45 different subunits.

It is found in the mitochondrion inner membrane. The enzyme catalyses a ubiquinone + NADH + 5 H(+)(in) = a ubiquinol + NAD(+) + 4 H(+)(out). Functionally, core subunit of the mitochondrial membrane respiratory chain NADH dehydrogenase (Complex I) which catalyzes electron transfer from NADH through the respiratory chain, using ubiquinone as an electron acceptor. Part of the enzyme membrane arm which is embedded in the lipid bilayer and involved in proton translocation. This chain is NADH-ubiquinone oxidoreductase chain 4L (MT-ND4L), found in Lepilemur sahamalazensis (Sahamalaza sportive lemur).